A 95-amino-acid polypeptide reads, in one-letter code: MNIRPLQDRVLVRRAEEEKKSAGGIILTGSAQEKPSQGEVVAVGNGKKLDNGTTLPMDVKVGDKVLFGKYSGSEVKVGDETLLMMREEDIMGIIA.

This sequence belongs to the GroES chaperonin family. Heptamer of 7 subunits arranged in a ring. Interacts with the chaperonin GroEL.

It localises to the cytoplasm. Functionally, together with the chaperonin GroEL, plays an essential role in assisting protein folding. The GroEL-GroES system forms a nano-cage that allows encapsulation of the non-native substrate proteins and provides a physical environment optimized to promote and accelerate protein folding. GroES binds to the apical surface of the GroEL ring, thereby capping the opening of the GroEL channel. This is Co-chaperonin GroES from Francisella tularensis subsp. tularensis (strain FSC 198).